The chain runs to 218 residues: Small ribosomal subunit protein uS3c (218 aa).

Residues 47 to 118 enclose the KH type-2 domain; sequence IQKTIKISSG…KLNIAITRIA (72 aa).

It belongs to the universal ribosomal protein uS3 family. As to quaternary structure, part of the 30S ribosomal subunit.

The protein resides in the plastid. It is found in the chloroplast. The chain is Small ribosomal subunit protein uS3c (rps3) from Lotus japonicus (Lotus corniculatus var. japonicus).